The chain runs to 619 residues: MDWEKVGLKMGLEIHQQLDTESKLFCPCRTELTDSEPDHDIVRNLRPTQSELGKFDRAAFEEAMRKLHFHYENYHEETCLVEADEEPPHPLNPEALEIAVTIALLLNMRVVDEFHTMRKQVIDGSNTGGFQRTGLVATDGHLETPQGTVKIENLCLEEDAARRIRETGDGVVFRLDRLGIPLVEITTDPSMSDPQQLREVAYQIGQILRSTRVKRGLGTIRQDLNISIRDGARVEVKGVQDLDLIPEIVEREVKRQLSLVEIRDTLQERGAVVEDKIFDVSEVFADTESRIISSAESVLAVKLRGFDGLIGVEIQPGRRLGTEMADYAKKRGVSGIFHTDELPAYGITEEEVRGLRDAVGASQGDAVVMVAHERVTAENALREVIRRAEMAIQGVPEETRKALPDGNTQYLRPLPTSSRMYLETDIPLFRIEDDLLEGIRRNLPELPSEKKERIMRDYGLSEDLASQLVKRNLVDEFEALTEFRVDTTVIASLLAYTLRELRREGHDVDGLGLDELRDAIKLLEVGKISKDALRDIVACMADEGLAAEDAARKLNLLLLAEDEIESIIQEIVEGNLDMISERGMGAMGPLMGQAMGRLRGRADGKVVNRILREKIQERL.

It belongs to the GatB/GatE family. GatE subfamily. In terms of assembly, heterodimer of GatD and GatE.

It catalyses the reaction L-glutamyl-tRNA(Gln) + L-glutamine + ATP + H2O = L-glutaminyl-tRNA(Gln) + L-glutamate + ADP + phosphate + H(+). Functionally, allows the formation of correctly charged Gln-tRNA(Gln) through the transamidation of misacylated Glu-tRNA(Gln) in organisms which lack glutaminyl-tRNA synthetase. The reaction takes place in the presence of glutamine and ATP through an activated gamma-phospho-Glu-tRNA(Gln). The GatDE system is specific for glutamate and does not act on aspartate. This is Glutamyl-tRNA(Gln) amidotransferase subunit E (gatE) from Methanothermobacter thermautotrophicus (strain ATCC 29096 / DSM 1053 / JCM 10044 / NBRC 100330 / Delta H) (Methanobacterium thermoautotrophicum).